The chain runs to 130 residues: MSDIMYRGLGRRKSSSARVILRPGKGEFLINKRVARDYLMSDILLKDALQPIVISDQKEKFDITVNVRGGGLSGQAGAIRLGIARALLEVSVDFRKNLKTAGMLTRDARVKERKKPGLKKARKARQFSKR.

The segment at 109–130 is disordered; that stretch reads RVKERKKPGLKKARKARQFSKR. A compositionally biased stretch (basic residues) spans 111 to 130; the sequence is KERKKPGLKKARKARQFSKR.

The protein belongs to the universal ribosomal protein uS9 family.

This is Small ribosomal subunit protein uS9 from Mycoplasma mobile (strain ATCC 43663 / 163K / NCTC 11711) (Mesomycoplasma mobile).